The following is a 466-amino-acid chain: Pentatricopeptide repeat-containing protein At4g01400, mitochondrial (466 aa).

The N-terminal 34 residues, 1–34 (MIRRPIYDFAAVFRHLTSPLSTSSRFLFYSSSEH), are a transit peptide targeting the mitochondrion. 8 PPR repeats span residues 118–152 (TGEI…NFTP), 153–188 (QPKH…GVMP), 189–223 (NTRS…DVVP), 224–258 (DVDS…GFVP), 259–293 (DRLS…GCNP), 294–328 (DLVH…GCSP), 329–363 (NSVS…GFSP), and 364–398 (HFSV…GETL).

It belongs to the PPR family. P subfamily.

The protein localises to the mitochondrion. This Arabidopsis thaliana (Mouse-ear cress) protein is Pentatricopeptide repeat-containing protein At4g01400, mitochondrial.